A 633-amino-acid polypeptide reads, in one-letter code: MNIRSNPDTTLPAVTTGPLPSSRKIYAVPDSAPDLRVPLREIILSEAASEPNLPVYDTSGPYTDPSVTIDVNAGLPRNRIAWVLERGGVEEYVGRDIKPEDNGNVGADKAAKAFTAHHKPLRGLDGHKITQLEFARAGIVTKEMIYVAERENLGRKVQLERAEAALADGESFGASVPAFITPEFVRDEIARGRAIIPCNINHAELEPMIIGRNFLTKINANIGNSAVTSSVEEEVDKMVWAIRWGADTVMDLSTGRNIHTTREWILRNSPVPIGTVPIYQALEKCNGDPVALTWELYKDTLIEQCEQGVDYFTIHAGVRLQYIHLTASRVTGIVSRGGSIMAKWCLAHHKESFLYTHFDEICDIMRKYDVSFSLGDGLRPGSIADANDRAQFAELETLGELTKIAWDKGCQVMIEGPGHVPMHKIKINMDKQLKECGEAPFYTLGPLTTDIAPGYDHITSGIGAAMIGWFGCAMLCYVTPKEHLGLPDRNDVKTGVITYKIAAHAADLAKGHPAAQLRDDALSRARFEFRWTDQFNLGLDPDTAKSFHDETLPKEAHKVAHFCSMCGPKFCSMKITQDVRDYAATLNDPATVGMTISGTIEDGMAQMSAKFKEMGGSVYLDAEKVKESNKALS.

Over residues Met-1–Ala-13 the composition is skewed to polar residues. The interval Met-1–Pro-20 is disordered. Residues Asn-221, Met-250, Tyr-279, His-315, Ser-335–Gly-337, Asp-376–Arg-379, and Glu-415 each bind substrate. Position 419 (His-419) interacts with Zn(2+). Tyr-442 serves as a coordination point for substrate. His-483 is a Zn(2+) binding site. 3 residues coordinate [4Fe-4S] cluster: Cys-563, Cys-566, and Cys-571.

It belongs to the ThiC family. In terms of assembly, homodimer. Requires [4Fe-4S] cluster as cofactor.

It catalyses the reaction 5-amino-1-(5-phospho-beta-D-ribosyl)imidazole + S-adenosyl-L-methionine = 4-amino-2-methyl-5-(phosphooxymethyl)pyrimidine + CO + 5'-deoxyadenosine + formate + L-methionine + 3 H(+). It functions in the pathway cofactor biosynthesis; thiamine diphosphate biosynthesis. Its function is as follows. Catalyzes the synthesis of the hydroxymethylpyrimidine phosphate (HMP-P) moiety of thiamine from aminoimidazole ribotide (AIR) in a radical S-adenosyl-L-methionine (SAM)-dependent reaction. This Bradyrhizobium sp. (strain ORS 278) protein is Phosphomethylpyrimidine synthase.